We begin with the raw amino-acid sequence, 221 residues long: MNFNVIIDHTLLKPQATSQDIKILIEEAKKYNFGAICIAPIWVKLAKKELKNTNIKIVTVIGFPLGSQISAIKQKEASLAIAHGADEIDMVMNIGKFKEKDFQFIINEINQIKKEIGAKILKVIIETALLSPHEIADATKLVSSTNADFIKTSTGFSYRGASEQDLKIIKENKSEKLAIKAAGGITNLADMENFYRLGATRFGTSKSLSIIKNLTDKKNQY.

The active-site Proton donor/acceptor is the Asp89. Catalysis depends on Lys151, which acts as the Schiff-base intermediate with acetaldehyde. Lys180 functions as the Proton donor/acceptor in the catalytic mechanism.

It belongs to the DeoC/FbaB aldolase family. DeoC type 1 subfamily.

The protein resides in the cytoplasm. It carries out the reaction 2-deoxy-D-ribose 5-phosphate = D-glyceraldehyde 3-phosphate + acetaldehyde. It functions in the pathway carbohydrate degradation; 2-deoxy-D-ribose 1-phosphate degradation; D-glyceraldehyde 3-phosphate and acetaldehyde from 2-deoxy-alpha-D-ribose 1-phosphate: step 2/2. Catalyzes a reversible aldol reaction between acetaldehyde and D-glyceraldehyde 3-phosphate to generate 2-deoxy-D-ribose 5-phosphate. This is Deoxyribose-phosphate aldolase from Mesomycoplasma hyopneumoniae (strain 232) (Mycoplasma hyopneumoniae).